The chain runs to 132 residues: Monothiol glutaredoxin-S9 (132 aa).

The tract at residues 16–38 (ASRPATAAAAPPPPPPRGEEEEV) is disordered. Residues 35–131 (EEEVRRAVAE…PILKEAGALW (97 aa)) form the Glutaredoxin domain. Position 55 (C55) interacts with [2Fe-2S] cluster. Residues 129 to 132 (ALWL) carry the Responsive for interaction with TGA factors motif.

This sequence belongs to the glutaredoxin family. CC-type subfamily.

It is found in the cytoplasm. The protein resides in the nucleus. In terms of biological role, may only reduce GSH-thiol disulfides, but not protein disulfides. In Oryza sativa subsp. japonica (Rice), this protein is Monothiol glutaredoxin-S9 (GRXS9).